We begin with the raw amino-acid sequence, 203 residues long: MSRYTGPKWRISRRLGVSLSGTGKELSRRAYAPGDHGAGRRAKISEYGMQLREKQKLRFTYGLTERQFKALFNKAGKIRKGTHGTNFMISLEQRLDSVVYRLGLATTRQQARQLVNHGHILVDGKRVDIPSYSVQPGQVVSVREKSKNILPIQAAIESVVARPQFVSLDTEKLEGSLVRLPEREELDADINEALIVEYYNHLG.

Residues 93 to 153 (QRLDSVVYRL…EKSKNILPIQ (61 aa)) form the S4 RNA-binding domain.

The protein belongs to the universal ribosomal protein uS4 family. As to quaternary structure, part of the 30S ribosomal subunit. Contacts protein S5. The interaction surface between S4 and S5 is involved in control of translational fidelity.

Functionally, one of the primary rRNA binding proteins, it binds directly to 16S rRNA where it nucleates assembly of the body of the 30S subunit. In terms of biological role, with S5 and S12 plays an important role in translational accuracy. In Leuconostoc mesenteroides subsp. mesenteroides (strain ATCC 8293 / DSM 20343 / BCRC 11652 / CCM 1803 / JCM 6124 / NCDO 523 / NBRC 100496 / NCIMB 8023 / NCTC 12954 / NRRL B-1118 / 37Y), this protein is Small ribosomal subunit protein uS4.